We begin with the raw amino-acid sequence, 933 residues long: Thyroid peroxidase (933 aa).

An N-terminal signal peptide occupies residues 1 to 18 (MRALAVLSVTLVMACTEA). The Extracellular segment spans residues 19-846 (FFPFISRGKE…TCVDSGRLPR (828 aa)). N129 carries N-linked (GlcNAc...) asparagine glycosylation. An intrachain disulfide couples C142 to C158. D238 contacts heme b. H239 acts as the Proton acceptor in catalysis. Ca(2+) is bound at residue D240. Cystine bridges form between C259/C269 and C263/C286. N307 carries an N-linked (GlcNAc...) asparagine glycan. Ca(2+) is bound by residues T321, F323, D325, and S327. N342 is a glycosylation site (N-linked (GlcNAc...) asparagine). Residues E399 and H494 each coordinate heme b. Residue N569 is glycosylated (N-linked (GlcNAc...) asparagine). 2 disulfide bridges follow: C598–C655 and C696–C721. A Sushi domain is found at 740–795 (DKCGFPESVENGDFVHCEESGRRVLVYSCRHGYELQGREQLTCTQEGWDFQPPLCK). The EGF-like; calcium-binding domain occupies 796 to 839 (DVNECADGAHPPCHASARCRNTKGGFQCLCADPYELGDDGRTCV). Cystine bridges form between C800-C814, C808-C823, and C825-C838. The chain crosses the membrane as a helical span at residues 847–871 (VTWISMSLAALLIGGFAGLTSTVIC). The Cytoplasmic portion of the chain corresponds to 872–933 (RWTRTGTKST…RDTHRLPRAL (62 aa)). Residues 881-933 (TLPISETGGGTPELRCGKHQAVGTSPQRAAAQDSEQESAGMEGRDTHRLPRAL) are disordered. Basic and acidic residues predominate over residues 922 to 933 (EGRDTHRLPRAL).

This sequence belongs to the peroxidase family. XPO subfamily. As to quaternary structure, interacts with DUOX1, DUOX2 and CYBA. Ca(2+) is required as a cofactor. Requires heme b as cofactor. Glycosylated. In terms of processing, heme is covalently bound through a H(2)O(2)-dependent autocatalytic process. Heme insertion is important for the delivery of protein at the cell surface. Post-translationally, cleaved in its N-terminal part.

Its subcellular location is the membrane. The protein localises to the cell surface. The catalysed reaction is 2 iodide + H2O2 + 2 H(+) = diiodine + 2 H2O. The enzyme catalyses [thyroglobulin]-L-tyrosine + iodide + H2O2 + H(+) = [thyroglobulin]-3-iodo-L-tyrosine + 2 H2O. It carries out the reaction [thyroglobulin]-3-iodo-L-tyrosine + iodide + H2O2 + H(+) = [thyroglobulin]-3,5-diiodo-L-tyrosine + 2 H2O. It catalyses the reaction 2 [thyroglobulin]-3,5-diiodo-L-tyrosine + H2O2 = [thyroglobulin]-L-thyroxine + [thyroglobulin]-dehydroalanine + 2 H2O. The catalysed reaction is [thyroglobulin]-3-iodo-L-tyrosine + [thyroglobulin]-3,5-diiodo-L-tyrosine + H2O2 = [thyroglobulin]-3,3',5-triiodo-L-thyronine + [thyroglobulin]-dehydroalanine + 2 H2O. It participates in hormone biosynthesis; thyroid hormone biosynthesis. Iodination and coupling of the hormonogenic tyrosines in thyroglobulin to yield the thyroid hormones T(3) and T(4). The chain is Thyroid peroxidase from Homo sapiens (Human).